Here is a 118-residue protein sequence, read N- to C-terminus: UPF0102 protein Csac_2148 (118 aa).

Belongs to the UPF0102 family.

The protein is UPF0102 protein Csac_2148 of Caldicellulosiruptor saccharolyticus (strain ATCC 43494 / DSM 8903 / Tp8T 6331).